A 383-amino-acid chain; its full sequence is Succinyl-diaminopimelate desuccinylase (383 aa).

Histidine 73 is a binding site for Zn(2+). The active site involves aspartate 75. Aspartate 107 is a binding site for Zn(2+). Glutamate 141 functions as the Proton acceptor in the catalytic mechanism. The Zn(2+) site is built by glutamate 142, glutamate 170, and histidine 356.

Belongs to the peptidase M20A family. DapE subfamily. Homodimer. The cofactor is Zn(2+). Co(2+) is required as a cofactor.

It catalyses the reaction N-succinyl-(2S,6S)-2,6-diaminopimelate + H2O = (2S,6S)-2,6-diaminopimelate + succinate. It functions in the pathway amino-acid biosynthesis; L-lysine biosynthesis via DAP pathway; LL-2,6-diaminopimelate from (S)-tetrahydrodipicolinate (succinylase route): step 3/3. Functionally, catalyzes the hydrolysis of N-succinyl-L,L-diaminopimelic acid (SDAP), forming succinate and LL-2,6-diaminopimelate (DAP), an intermediate involved in the bacterial biosynthesis of lysine and meso-diaminopimelic acid, an essential component of bacterial cell walls. The protein is Succinyl-diaminopimelate desuccinylase of Pseudomonas syringae pv. tomato (strain ATCC BAA-871 / DC3000).